The sequence spans 271 residues: ATP synthase subunit a (271 aa).

The next 5 membrane-spanning stretches (helical) occupy residues 40-60 (TINI…LVLF), 100-120 (LIAP…LMDL), 146-166 (DVNV…FYNI), 220-240 (LIFI…LNVP), and 242-262 (AIFH…LTIV).

The protein belongs to the ATPase A chain family. As to quaternary structure, F-type ATPases have 2 components, CF(1) - the catalytic core - and CF(0) - the membrane proton channel. CF(1) has five subunits: alpha(3), beta(3), gamma(1), delta(1), epsilon(1). CF(0) has three main subunits: a(1), b(2) and c(9-12). The alpha and beta chains form an alternating ring which encloses part of the gamma chain. CF(1) is attached to CF(0) by a central stalk formed by the gamma and epsilon chains, while a peripheral stalk is formed by the delta and b chains.

It localises to the cell inner membrane. Key component of the proton channel; it plays a direct role in the translocation of protons across the membrane. This chain is ATP synthase subunit a, found in Shigella flexneri.